A 931-amino-acid chain; its full sequence is Netrin receptor UNC5C (931 aa).

Residues M1–A39 form the signal peptide. Residues A40–Y380 lie on the Extracellular side of the membrane. In terms of domain architecture, Ig-like spans P62–Y159. 9 disulfides stabilise this stretch: C83-C144, C95-C142, C188-C239, C272-C309, C276-C313, C287-C299, C328-C362, C332-C367, and C340-C352. An Ig-like C2-type domain is found at R161–I256. A glycan (N-linked (GlcNAc...) asparagine) is linked at N236. 2 consecutive TSP type-1 domains span residues N260 to P314 and D316 to M368. Residue N361 is glycosylated (N-linked (GlcNAc...) asparagine). The chain crosses the membrane as a helical span at residues V381 to V401. Residues Y402 to Y931 are Cytoplasmic-facing. The region spanning C530–L664 is the ZU5 domain. A Death domain is found at Q850–G929.

It belongs to the unc-5 family. As to expression, restricted to proprioceptive neurons.

It localises to the cell membrane. Its subcellular location is the cell surface. The protein resides in the synapse. It is found in the synaptosome. The protein localises to the cell projection. It localises to the axon. Its subcellular location is the dendrite. The protein resides in the growth cone. It is found in the lamellipodium. The protein localises to the filopodium. Receptor for netrin required for axon guidance. Mediates axon repulsion of neuronal growth cones in the developing nervous system upon ligand binding. Involved in dorsal root ganglion axon projection towards the spinal cord. This Gallus gallus (Chicken) protein is Netrin receptor UNC5C (UNC5C).